The primary structure comprises 90 residues: Small ribosomal subunit protein bS20 (90 aa).

A compositionally biased stretch (polar residues) spans 1–10 (MANHKSTQKS). The tract at residues 1–25 (MANHKSTQKSIRQDQKRNLINKSRK) is disordered.

Belongs to the bacterial ribosomal protein bS20 family.

Functionally, binds directly to 16S ribosomal RNA. The protein is Small ribosomal subunit protein bS20 of Orientia tsutsugamushi (strain Boryong) (Rickettsia tsutsugamushi).